The primary structure comprises 310 residues: Porphobilinogen deaminase (310 aa).

Cys-242 bears the S-(dipyrrolylmethanemethyl)cysteine mark.

This sequence belongs to the HMBS family. In terms of assembly, monomer. The cofactor is dipyrromethane.

It carries out the reaction 4 porphobilinogen + H2O = hydroxymethylbilane + 4 NH4(+). The protein operates within porphyrin-containing compound metabolism; protoporphyrin-IX biosynthesis; coproporphyrinogen-III from 5-aminolevulinate: step 2/4. In terms of biological role, tetrapolymerization of the monopyrrole PBG into the hydroxymethylbilane pre-uroporphyrinogen in several discrete steps. This is Porphobilinogen deaminase from Shewanella baltica (strain OS155 / ATCC BAA-1091).